Reading from the N-terminus, the 514-residue chain is 2,3-bisphosphoglycerate-independent phosphoglycerate mutase (514 aa).

The Mn(2+) site is built by aspartate 14 and serine 64. The active-site Phosphoserine intermediate is serine 64. Substrate contacts are provided by residues histidine 125, 155 to 156 (RD), arginine 187, arginine 193, 263 to 266 (RADR), and lysine 336. The Mn(2+) site is built by aspartate 403, histidine 407, aspartate 444, histidine 445, and histidine 463.

The protein belongs to the BPG-independent phosphoglycerate mutase family. In terms of assembly, monomer. It depends on Mn(2+) as a cofactor.

The catalysed reaction is (2R)-2-phosphoglycerate = (2R)-3-phosphoglycerate. Its pathway is carbohydrate degradation; glycolysis; pyruvate from D-glyceraldehyde 3-phosphate: step 3/5. Its function is as follows. Catalyzes the interconversion of 2-phosphoglycerate and 3-phosphoglycerate. In Shewanella halifaxensis (strain HAW-EB4), this protein is 2,3-bisphosphoglycerate-independent phosphoglycerate mutase.